Here is a 470-residue protein sequence, read N- to C-terminus: Sorting nexin-17 (470 aa).

In terms of domain architecture, PX spans 1-109 (MHFSIPETES…SFLRRAQQET (109 aa)). 4 residues coordinate a 1,2-diacyl-sn-glycero-3-phospho-(1D-myo-inositol-3-phosphate): arginine 36, serine 38, lysine 62, and arginine 75. The Ras-associating domain occupies 115–206 (EEVSLEVLLS…YKIVLRKSYW (92 aa)). The tract at residues 115–432 (EEVSLEVLLS…DATRESMVKL (318 aa)) is FERM-like. A PTB-like F3 module region spans residues 270 to 432 (GYLRFDACVA…DATRESMVKL (163 aa)). A phosphoserine mark is found at serine 336, serine 407, serine 409, serine 415, serine 421, serine 437, and serine 440. Residues 401-426 (GGTLRRSDSQQAVKSPPLLESPDATR) form a disordered region. The tract at residues 458 to 470 (GNFAFEGIGDEDL) is interacts with the retriever complex.

This sequence belongs to the sorting nexin family. Monomer. Interacts with APP (via cytoplasmic YXNPXY motif). Interacts with KIF1B. Interacts with the C-termini of P-selectin, PTC, LDLR, VLDLR, LRP1 and LRP8. Interacts with KRIT1 (via N-terminus). Interacts with HRAS. Interacts with ITGB1 and ITGB5 (via NPxY motif). Interacts with CCDC22 and CCDC93; the interaction associates SNX17 with the CCC complex. Interacts (via C-terminus) with VPS26C and VPS35L; the interactions are direct and associate SNX17 with the retriever complex.

It localises to the cytoplasm. The protein localises to the early endosome. The protein resides in the cytoplasmic vesicle membrane. Its function is as follows. Critical regulator of endosomal recycling of numerous surface proteins, including integrins, signaling receptor and channels. Binds to NPxY sequences in the cytoplasmic tails of target cargos. Associates with retriever and CCC complexes to prevent lysosomal degradation and promote cell surface recycling of numerous cargos such as integrins ITGB1, ITGB5 and their associated alpha subunits. Also required for maintenance of normal cell surface levels of APP and LRP1. Interacts with membranes containing phosphatidylinositol 3-phosphate (PtdIns(3P)). This chain is Sorting nexin-17 (SNX17), found in Homo sapiens (Human).